A 91-amino-acid chain; its full sequence is Small ribosomal subunit protein uS19 (91 aa).

Belongs to the universal ribosomal protein uS19 family.

Protein S19 forms a complex with S13 that binds strongly to the 16S ribosomal RNA. This is Small ribosomal subunit protein uS19 from Metamycoplasma hominis (strain ATCC 23114 / DSM 25592 / NBRC 14850 / NCTC 10111 / PG21) (Mycoplasma hominis).